The primary structure comprises 274 residues: Large ribosomal subunit protein uL2 (274 aa).

The segment at 224–256 is disordered; the sequence is VMNPVDHPHGGGEGKTGEGRHPVDPWGNLTKGY. A compositionally biased stretch (basic and acidic residues) spans 229–246; that stretch reads DHPHGGGEGKTGEGRHPV.

The protein belongs to the universal ribosomal protein uL2 family. In terms of assembly, part of the 50S ribosomal subunit. Forms a bridge to the 30S subunit in the 70S ribosome.

Its function is as follows. One of the primary rRNA binding proteins. Required for association of the 30S and 50S subunits to form the 70S ribosome, for tRNA binding and peptide bond formation. It has been suggested to have peptidyltransferase activity; this is somewhat controversial. Makes several contacts with the 16S rRNA in the 70S ribosome. The sequence is that of Large ribosomal subunit protein uL2 from Polaromonas naphthalenivorans (strain CJ2).